We begin with the raw amino-acid sequence, 834 residues long: ATP-dependent 6-phosphofructokinase (834 aa).

Residues 1-426 form an N-terminal catalytic PFK domain 1 region; it reads MTTTSKIIND…FYEIFIACSN (426 aa). ATP contacts are provided by residues Gly-62, 123-124, and 153-156; these read RS and GDGS. Asp-154 lines the Mg(2+) pocket. Residues 199–201, Arg-236, 243–245, Glu-299, Arg-326, and 332–335 contribute to the substrate site; these read SID, MGR, and HVQR. The active-site Proton acceptor is the Asp-201. The interval 427–437 is interdomain linker; it reads LHRRKVESKGM. Positions 438 to 834 are C-terminal regulatory PFK domain 2; sequence GVLILHSGGP…DPNVNPQFTL (397 aa). Beta-D-fructose 2,6-bisphosphate-binding positions include Arg-507, 566–570, Arg-603, 610–612, Glu-666, Arg-692, 698–701, and Arg-764; these read TIANN, MGA, and HLQQ. Positions 799–834 are disordered; it reads SNLSEQDRPIKKSDISSPTSYSQKTFDPNVNPQFTL. A compositionally biased stretch (basic and acidic residues) spans 803-812; sequence EQDRPIKKSD. Positions 813–834 are enriched in polar residues; the sequence is ISSPTSYSQKTFDPNVNPQFTL.

It belongs to the phosphofructokinase type A (PFKA) family. ATP-dependent PFK group I subfamily. Eukaryotic two domain clade 'E' sub-subfamily. In terms of assembly, homotetramer. Mg(2+) serves as cofactor. The N-terminus is blocked.

The protein resides in the cytoplasm. The catalysed reaction is beta-D-fructose 6-phosphate + ATP = beta-D-fructose 1,6-bisphosphate + ADP + H(+). It functions in the pathway carbohydrate degradation; glycolysis; D-glyceraldehyde 3-phosphate and glycerone phosphate from D-glucose: step 3/4. Its activity is regulated as follows. Allosterically activated by ADP, AMP, or fructose 2,6-bisphosphate, and allosterically inhibited by ATP or citrate. Its function is as follows. Catalyzes the phosphorylation of D-fructose 6-phosphate to fructose 1,6-bisphosphate by ATP, the first committing step of glycolysis. This Dictyostelium discoideum (Social amoeba) protein is ATP-dependent 6-phosphofructokinase (pfkA).